Consider the following 102-residue polypeptide: Pyrimidine/purine nucleoside phosphorylase (102 aa).

This sequence belongs to the nucleoside phosphorylase PpnP family.

It catalyses the reaction a purine D-ribonucleoside + phosphate = a purine nucleobase + alpha-D-ribose 1-phosphate. It carries out the reaction adenosine + phosphate = alpha-D-ribose 1-phosphate + adenine. The enzyme catalyses cytidine + phosphate = cytosine + alpha-D-ribose 1-phosphate. The catalysed reaction is guanosine + phosphate = alpha-D-ribose 1-phosphate + guanine. It catalyses the reaction inosine + phosphate = alpha-D-ribose 1-phosphate + hypoxanthine. It carries out the reaction thymidine + phosphate = 2-deoxy-alpha-D-ribose 1-phosphate + thymine. The enzyme catalyses uridine + phosphate = alpha-D-ribose 1-phosphate + uracil. The catalysed reaction is xanthosine + phosphate = alpha-D-ribose 1-phosphate + xanthine. Functionally, catalyzes the phosphorolysis of diverse nucleosides, yielding D-ribose 1-phosphate and the respective free bases. Can use uridine, adenosine, guanosine, cytidine, thymidine, inosine and xanthosine as substrates. Also catalyzes the reverse reactions. This is Pyrimidine/purine nucleoside phosphorylase from Shewanella amazonensis (strain ATCC BAA-1098 / SB2B).